We begin with the raw amino-acid sequence, 268 residues long: DNA repair protein RecO (268 aa).

The protein belongs to the RecO family.

In terms of biological role, involved in DNA repair and RecF pathway recombination. The polypeptide is DNA repair protein RecO (Parasynechococcus marenigrum (strain WH8102)).